The chain runs to 234 residues: Protein UL20 homolog (234 aa).

The next 4 membrane-spanning stretches (helical) occupy residues 82 to 102, 112 to 132, 153 to 173, and 191 to 211; these read VVLF…IFLF, FLIL…LEMY, IGAL…NMIF, and TSGF…ITSI.

This sequence belongs to the alphaherpesvirinae UL20 family. In terms of assembly, interacts with gK (via N-terminus); this interaction plays a role in the coordinate transport of UL20 and gK to the trans-Golgi network (TGN), and is required for their cell surface expression. Interacts with gB.

It is found in the virion. It localises to the host cell membrane. Its subcellular location is the host endosome membrane. The protein resides in the host Golgi apparatus membrane. The protein localises to the host nucleus membrane. Plays an essential role in egress of virus particles from the nucleus, cytoplasmic envelopment and virus-induced cell fusion. Forms a functional protein complex with gK and this interaction is absolutely essential for their coordinate intracellular transport, gK glycosylation, expression on host cell surface, and function. Together, they modulate gB-mediated virus-induced cell fusion and virion egress and therefore actively participate in these processes. This chain is Protein UL20 homolog (MDV032), found in Gallid herpesvirus 2 (strain Chicken/Md5/ATCC VR-987) (GaHV-2).